The following is a 278-amino-acid chain: Adenosylcobinamide-GDP ribazoletransferase (278 aa).

The next 7 helical transmembrane spans lie at 31–51 (AMALAPFVGLALGLLAGSAVF), 66–86 (TLLPAVVGVTVLALVTRGLHL), 115–135 (TIGAFGAIIVLFVVLLQVGAL), 148–168 (ILVAAMTSRLAATLACTGAVP), 187–207 (DAALSFLAVCAVAALAGLLDF), 215–237 (ALRAVLAVWVGTGVSFLLRRYLL), and 247–267 (ILGGLIEITAAATLLVMAMTI).

The protein belongs to the CobS family. Mg(2+) serves as cofactor.

It is found in the cell membrane. The enzyme catalyses alpha-ribazole + adenosylcob(III)inamide-GDP = adenosylcob(III)alamin + GMP + H(+). It catalyses the reaction alpha-ribazole 5'-phosphate + adenosylcob(III)inamide-GDP = adenosylcob(III)alamin 5'-phosphate + GMP + H(+). The protein operates within cofactor biosynthesis; adenosylcobalamin biosynthesis; adenosylcobalamin from cob(II)yrinate a,c-diamide: step 7/7. Its function is as follows. Joins adenosylcobinamide-GDP and alpha-ribazole to generate adenosylcobalamin (Ado-cobalamin). Also synthesizes adenosylcobalamin 5'-phosphate from adenosylcobinamide-GDP and alpha-ribazole 5'-phosphate. This is Adenosylcobinamide-GDP ribazoletransferase from Frankia casuarinae (strain DSM 45818 / CECT 9043 / HFP020203 / CcI3).